We begin with the raw amino-acid sequence, 632 residues long: 1-deoxy-D-xylulose-5-phosphate synthase (632 aa).

Residues histidine 87 and 128 to 130 (GHS) contribute to the thiamine diphosphate site. A Mg(2+)-binding site is contributed by aspartate 159. Thiamine diphosphate is bound by residues 160-161 (GA), asparagine 188, phenylalanine 295, and glutamate 378. Asparagine 188 is a Mg(2+) binding site.

It belongs to the transketolase family. DXPS subfamily. Homodimer. Mg(2+) is required as a cofactor. It depends on thiamine diphosphate as a cofactor.

It catalyses the reaction D-glyceraldehyde 3-phosphate + pyruvate + H(+) = 1-deoxy-D-xylulose 5-phosphate + CO2. Its pathway is metabolic intermediate biosynthesis; 1-deoxy-D-xylulose 5-phosphate biosynthesis; 1-deoxy-D-xylulose 5-phosphate from D-glyceraldehyde 3-phosphate and pyruvate: step 1/1. Its function is as follows. Catalyzes the acyloin condensation reaction between C atoms 2 and 3 of pyruvate and glyceraldehyde 3-phosphate to yield 1-deoxy-D-xylulose-5-phosphate (DXP). The polypeptide is 1-deoxy-D-xylulose-5-phosphate synthase (Pseudomonas fluorescens (strain SBW25)).